Here is a 658-residue protein sequence, read N- to C-terminus: Threonine--tRNA ligase (658 aa).

The 64-residue stretch at 1–64 folds into the TGS domain; the sequence is MSNTVSLQFP…GASGKLEIIT (64 aa). The catalytic stretch occupies residues 246 to 548; sequence DHRRLGREMD…LIENFAGHMP (303 aa). Zn(2+) is bound by residues cysteine 343, histidine 394, and histidine 525.

It belongs to the class-II aminoacyl-tRNA synthetase family. Homodimer. It depends on Zn(2+) as a cofactor.

The protein localises to the cytoplasm. The enzyme catalyses tRNA(Thr) + L-threonine + ATP = L-threonyl-tRNA(Thr) + AMP + diphosphate + H(+). In terms of biological role, catalyzes the attachment of threonine to tRNA(Thr) in a two-step reaction: L-threonine is first activated by ATP to form Thr-AMP and then transferred to the acceptor end of tRNA(Thr). Also edits incorrectly charged L-seryl-tRNA(Thr). In Brucella abortus (strain S19), this protein is Threonine--tRNA ligase.